The primary structure comprises 246 residues: Protein phosphatase PhpP (246 aa).

Residues 2–240 (EISLLTDVGQ…DNITVALVSM (239 aa)) form the PPM-type phosphatase domain. Asp-36, Gly-37, Asp-192, and Asp-231 together coordinate Mn(2+).

The protein belongs to the PP2C family. In terms of assembly, interacts with the kinase domain of StkP. Mn(2+) serves as cofactor.

It localises to the cytoplasm. It carries out the reaction O-phospho-L-seryl-[protein] + H2O = L-seryl-[protein] + phosphate. The enzyme catalyses O-phospho-L-threonyl-[protein] + H2O = L-threonyl-[protein] + phosphate. Its activity is regulated as follows. Phosphatase activity is inhibited by NaF but not by okadaic acid. Its function is as follows. Protein phosphatase able to dephosphorylate StkP-P and a phosphothreonine residue in a phosphopeptide synthetic substrate. PhpP and its cognate protein kinase StkP appear to constitute a functional signaling couple in vivo, PhpP's primary role probably being to control phosphorylation levels of StkP and of its targets (which include LocZ, DivIVA and KhpB (also called EloR/Jag)). PhpP thus performs an essential control of StkP activity. Overexpression confers an stkP deletion-like phenotype. The polypeptide is Protein phosphatase PhpP (phpP) (Streptococcus pneumoniae).